The sequence spans 76 residues: ATP synthase subunit 9, mitochondrial (76 aa).

2 helical membrane passes run 14-34 (IATL…VALI) and 52-72 (ILGF…SFLL).

It belongs to the ATPase C chain family. As to quaternary structure, F-type ATPases have 2 components, CF(1) - the catalytic core - and CF(0) - the membrane proton channel. CF(1) has five subunits: alpha(3), beta(3), gamma(1), delta(1), epsilon(1). CF(0) has three main subunits: a, b and c.

The protein resides in the mitochondrion membrane. Its function is as follows. Mitochondrial membrane ATP synthase (F(1)F(0) ATP synthase or Complex V) produces ATP from ADP in the presence of a proton gradient across the membrane which is generated by electron transport complexes of the respiratory chain. F-type ATPases consist of two structural domains, F(1) - containing the extramembraneous catalytic core and F(0) - containing the membrane proton channel, linked together by a central stalk and a peripheral stalk. During catalysis, ATP synthesis in the catalytic domain of F(1) is coupled via a rotary mechanism of the central stalk subunits to proton translocation. Part of the complex F(0) domain. A homomeric c-ring of probably 10 subunits is part of the complex rotary element. In Candida albicans (strain SC5314 / ATCC MYA-2876) (Yeast), this protein is ATP synthase subunit 9, mitochondrial (ATP9).